The following is a 408-amino-acid chain: uncharacterized protein (408 aa).

Disordered regions lie at residues 218–265 (EPTA…TSER) and 367–408 (MESE…ETPN). A compositionally biased stretch (low complexity) spans 369 to 379 (SEVINSSSSTS). Residues 394–408 (IVEEVPETAENETPN) show a composition bias toward acidic residues.

The protein to C.elegans C05E11.1.

This is an uncharacterized protein from Arabidopsis thaliana (Mouse-ear cress).